A 315-amino-acid polypeptide reads, in one-letter code: Ribosomal RNA small subunit methyltransferase H (315 aa).

Residues 37-39 (GGH), Asp57, Phe83, Asp105, and Gln112 contribute to the S-adenosyl-L-methionine site.

This sequence belongs to the methyltransferase superfamily. RsmH family.

It is found in the cytoplasm. The enzyme catalyses cytidine(1402) in 16S rRNA + S-adenosyl-L-methionine = N(4)-methylcytidine(1402) in 16S rRNA + S-adenosyl-L-homocysteine + H(+). Functionally, specifically methylates the N4 position of cytidine in position 1402 (C1402) of 16S rRNA. In Pseudomonas putida (strain ATCC 47054 / DSM 6125 / CFBP 8728 / NCIMB 11950 / KT2440), this protein is Ribosomal RNA small subunit methyltransferase H.